Here is a 157-residue protein sequence, read N- to C-terminus: 2-C-methyl-D-erythritol 2,4-cyclodiphosphate synthase (157 aa).

Residues aspartate 8 and histidine 10 each coordinate a divalent metal cation. 4-CDP-2-C-methyl-D-erythritol 2-phosphate-binding positions include 8-10 and 35-36; these read DIH and HS. Histidine 43 is an a divalent metal cation binding site. Residues 57-59, 62-66, and lysine 142 each bind 4-CDP-2-C-methyl-D-erythritol 2-phosphate; these read DIG and FPNND.

The protein belongs to the IspF family. Homotrimer. A divalent metal cation serves as cofactor.

It carries out the reaction 4-CDP-2-C-methyl-D-erythritol 2-phosphate = 2-C-methyl-D-erythritol 2,4-cyclic diphosphate + CMP. Its pathway is isoprenoid biosynthesis; isopentenyl diphosphate biosynthesis via DXP pathway; isopentenyl diphosphate from 1-deoxy-D-xylulose 5-phosphate: step 4/6. In terms of biological role, involved in the biosynthesis of isopentenyl diphosphate (IPP) and dimethylallyl diphosphate (DMAPP), two major building blocks of isoprenoid compounds. Catalyzes the conversion of 4-diphosphocytidyl-2-C-methyl-D-erythritol 2-phosphate (CDP-ME2P) to 2-C-methyl-D-erythritol 2,4-cyclodiphosphate (ME-CPP) with a corresponding release of cytidine 5-monophosphate (CMP). In Wigglesworthia glossinidia brevipalpis, this protein is 2-C-methyl-D-erythritol 2,4-cyclodiphosphate synthase.